Consider the following 913-residue polypeptide: DNA mismatch repair protein MutS (913 aa).

Position 720–727 (720–727 (GPNASGKS)) interacts with ATP.

Belongs to the DNA mismatch repair MutS family.

Functionally, this protein is involved in the repair of mismatches in DNA. It is possible that it carries out the mismatch recognition step. This protein has a weak ATPase activity. This is DNA mismatch repair protein MutS from Prochlorococcus marinus (strain MIT 9312).